Consider the following 96-residue polypeptide: NADH-ubiquinone oxidoreductase chain 4L (96 aa).

Helical transmembrane passes span Met-1–Leu-21, Met-27–Phe-47, and Ile-61–Ile-81.

This sequence belongs to the complex I subunit 4L family.

The protein resides in the mitochondrion membrane. It catalyses the reaction a ubiquinone + NADH + 5 H(+)(in) = a ubiquinol + NAD(+) + 4 H(+)(out). Functionally, core subunit of the mitochondrial membrane respiratory chain NADH dehydrogenase (Complex I) which catalyzes electron transfer from NADH through the respiratory chain, using ubiquinone as an electron acceptor. Part of the enzyme membrane arm which is embedded in the lipid bilayer and involved in proton translocation. The protein is NADH-ubiquinone oxidoreductase chain 4L (MT-ND4L) of Lycodon semicarinatus (Ryukyu odd-tooth snake).